Here is a 430-residue protein sequence, read N- to C-terminus: Type 3 secretion system ATPase (430 aa).

162 to 167 (GCGKTF) lines the ATP pocket.

The protein belongs to the ATPase alpha/beta chains family. T3SS ATPase subfamily. The core secretion machinery of the T3SS is composed of approximately 20 different proteins, including cytoplasmic components, a base, an export apparatus and a needle. This subunit is part of the cytosolic complex. Forms homohexamers. Interacts directly with MxiN/SctL (stator protein) and Spa13/SctO (stalk protein). Can form a soluble complex with Spa33/SctQ, MxiN/SctL and MxiK/SctK.

It localises to the cytoplasm. It catalyses the reaction ATP + H2O + cellular proteinSide 1 = ADP + phosphate + cellular proteinSide 2.. Oligomerization increases ATPase activity. Monomeric forms exhibit low-level ATPase activity by forming short-lived oligomers with active site contributions from at least two protomers. In contrast, oligomers exhibit enhanced ATP hydrolysis rates that likely result from multiple preformed active sites within the oligomeric complex. Oligomerization is important for both enzyme activation and T3SS function. Activity is regulated by MxiN/SctL, which differentially regulates the activity of the monomer and the oligomer: it up-regulates the ATPase activity of the monomer, while it down-regulates the activity of the oligomer. In terms of biological role, ATPase component of the type III secretion system (T3SS), also called injectisome, which is used to inject bacterial effector proteins into eukaryotic host cells. Acts as a molecular motor to provide the energy that is required for the export of proteins. Required for type III secretion apparatus (T3SA) formation, proper protein secretion, host cell invasion and virulence. May play a critical role in T3SS substrate recognition, disassembly of the effector/chaperone complex and unfolding of the effector in an ATP-dependent manner prior to secretion. The chain is Type 3 secretion system ATPase from Shigella flexneri.